The primary structure comprises 291 residues: N-acetylmannosamine kinase (291 aa).

Residues 5–12 (AIDIGGTK) and 132–139 (GVGGGVVS) contribute to the ATP site. Zn(2+)-binding residues include His156, Cys166, Cys168, and Cys173.

It belongs to the ROK (NagC/XylR) family. NanK subfamily. In terms of assembly, homodimer.

It catalyses the reaction an N-acyl-D-mannosamine + ATP = an N-acyl-D-mannosamine 6-phosphate + ADP + H(+). Its pathway is amino-sugar metabolism; N-acetylneuraminate degradation; D-fructose 6-phosphate from N-acetylneuraminate: step 2/5. Its function is as follows. Catalyzes the phosphorylation of N-acetylmannosamine (ManNAc) to ManNAc-6-P. This Escherichia coli (strain ATCC 8739 / DSM 1576 / NBRC 3972 / NCIMB 8545 / WDCM 00012 / Crooks) protein is N-acetylmannosamine kinase.